The following is a 274-amino-acid chain: Large ribosomal subunit protein uL2 (274 aa).

Disordered regions lie at residues 28 to 54 (APHA…TRHI) and 224 to 274 (VAMN…RRRK). A compositionally biased stretch (basic and acidic residues) spans 263 to 274 (KRTDKMIVRRRK).

This sequence belongs to the universal ribosomal protein uL2 family. As to quaternary structure, part of the 50S ribosomal subunit. Forms a bridge to the 30S subunit in the 70S ribosome.

Its function is as follows. One of the primary rRNA binding proteins. Required for association of the 30S and 50S subunits to form the 70S ribosome, for tRNA binding and peptide bond formation. It has been suggested to have peptidyltransferase activity; this is somewhat controversial. Makes several contacts with the 16S rRNA in the 70S ribosome. The chain is Large ribosomal subunit protein uL2 from Pseudomonas syringae pv. tomato (strain ATCC BAA-871 / DC3000).